The primary structure comprises 278 residues: NAD kinase (278 aa).

Catalysis depends on Asp67, which acts as the Proton acceptor. NAD(+) contacts are provided by residues 67–68 (DG), Arg72, 137–138 (NE), Lys148, Arg165, Asp167, 178–183 (TGYALS), and Gln237.

This sequence belongs to the NAD kinase family. The cofactor is a divalent metal cation.

It is found in the cytoplasm. The enzyme catalyses NAD(+) + ATP = ADP + NADP(+) + H(+). Involved in the regulation of the intracellular balance of NAD and NADP, and is a key enzyme in the biosynthesis of NADP. Catalyzes specifically the phosphorylation on 2'-hydroxyl of the adenosine moiety of NAD to yield NADP. In Thermococcus gammatolerans (strain DSM 15229 / JCM 11827 / EJ3), this protein is NAD kinase.